We begin with the raw amino-acid sequence, 374 residues long: C-X-C chemokine receptor type 5 (374 aa).

Residues 1-57 lie on the Extracellular side of the membrane; it reads MNSPISLDMGAITYNMDDLYKELAIYSNSTEIPLQDSIFCSTEEGPLLTSFKTIFMP. N-linked (GlcNAc...) asparagine glycosylation occurs at Asn28. A helical transmembrane segment spans residues 58–78; it reads VAYSLIFLLGMMGNILVLVIL. Residues 79–90 lie on the Cytoplasmic side of the membrane; it reads ERHRHTRSSTET. A helical transmembrane segment spans residues 91-111; the sequence is FLFHLAVADLLLVFILPFAVA. Over 112 to 126 the chain is Extracellular; sequence EGSVGWVLGTFLCKT. Cys124 and Cys204 are joined by a disulfide. The chain crosses the membrane as a helical span at residues 127–147; the sequence is VIALHKINFYCSSLLLACIAV. Residues 148-169 are Cytoplasmic-facing; that stretch reads DRYLAIVHAVHAYRRRRLLSIH. Residues 170-190 form a helical membrane-spanning segment; it reads ITCSTIWLAGFLFALPELLFA. Residues 191–221 are Extracellular-facing; that stretch reads KVVQPHNNESLPQCIFSQENEAETRAWFASR. An N-linked (GlcNAc...) asparagine glycan is attached at Asn198. The chain crosses the membrane as a helical span at residues 222-242; that stretch reads FLYHTGGFLLPMLVMAWCYVG. Residues 243–261 lie on the Cytoplasmic side of the membrane; it reads VVHRLLQAQRRPQRQKAVR. A helical membrane pass occupies residues 262 to 282; the sequence is VAILVTSIFLLCWSPYHIVIF. Over 283-306 the chain is Extracellular; it reads LDTLERLKAVNSSCELSGYLSVAI. A helical transmembrane segment spans residues 307-327; the sequence is TLCEFLGLAHCCLNPMLYTFA. The Cytoplasmic segment spans residues 328 to 374; the sequence is GVKFRSDLSRLLTKLGCAGPASLCQLFPGWRKSSLSESENATSLTTF.

This sequence belongs to the G-protein coupled receptor 1 family. As to expression, expressed in neuronal and lymphatic tissue.

The protein localises to the cell membrane. In terms of biological role, cytokine receptor that binds to B-lymphocyte chemoattractant (BLC). Involved in B-cell migration into B-cell follicles of spleen and Peyer patches but not into those of mesenteric or peripheral lymph nodes. This chain is C-X-C chemokine receptor type 5 (Cxcr5), found in Rattus norvegicus (Rat).